The primary structure comprises 425 residues: AFP homolog 2 (425 aa).

Disordered regions lie at residues 1–207 (MDDD…SGTE) and 288–327 (PFAGRVPSNSATAKGEGKQPVAEEGSSEDASERPTGDNSN). The interval 7 to 17 (LELSLGLSCGG) is necessary and sufficient for the interaction with TOPLESS. A compositionally biased stretch (low complexity) spans 20-34 (GKAKGNNNNNAGSSS). The segment covering 37 to 54 (YRAEGGDRSAKVIDDFKN) has biased composition (basic and acidic residues). Residues 66–81 (PSSGSQRSDSGQQPPQ) are compositionally biased toward low complexity. Residues 124 to 140 (NDDKKKEKDSSHVDMHE) show a composition bias toward basic and acidic residues. Polar residues-rich tracts occupy residues 146–158 (SHVSTATDEGSTA), 185–197 (TDTNIVDNLTGQR), and 288–299 (PFAGRVPSNSAT). Positions 322–425 (TGDNSNLNTA…MGMTAASAHT (104 aa)) are necessary and sufficient for the interaction with the JAZ proteins.

It belongs to the Ninja family. Component of a complex at least composed of TOPLESS, TPR2, TPR3, TIFY4B/PPD2, MYC3/ATR2 and TIFY3B/JAZ12. Interacts (via C-terminus) with TIFY10A/JAZ1; TIFY10B/JAZ2; TIFY6B/JAZ3; TIFY6A/JAZ4; TIFY11A/JAZ5; TIFY11B/JAZ6; TIFY7/JAZ9; TIFY9/JAZ10; TIFY3A/JAZ11; TIFY3B/JAZ12; TIFY4A/PPD1; TIFY4B/PPD2 and TIFY8 (via TIFY domain). Interacts with TOPLESS. Interacts with PAT1H1.

It is found in the nucleus. Its function is as follows. Acts as a transcriptional repressor. Negative regulator of jasmonate responses. Connects the JAZ proteins and the non-JAZ protein TIFY8 with the TOPLESS corepressors. This Arabidopsis thaliana (Mouse-ear cress) protein is AFP homolog 2.